The primary structure comprises 326 residues: Microtubule-associated protein RP/EB family member 2 (326 aa).

Phosphoserine is present on serine 9. Residues 56–158 (TMSRHDIIAW…FIQWFKKFYD (103 aa)) enclose the Calponin-homology (CH) domain. A Phosphotyrosine modification is found at tyrosine 166. Disordered stretches follow at residues 170-239 (EARQ…DKDL) and 297-326 (YASD…QEEY). Residues 186-326 (QIFNLPKKSH…DQQPQQQEEY (141 aa)) form a DCTN1-binding region. Low complexity predominate over residues 199-233 (SPTAGAAKSSPASKPGSTPSRPSSAKRASSSGSAS). Phosphoserine occurs at positions 218 and 235. One can recognise an EB1 C-terminal domain in the interval 235–305 (SDKDLETQVI…LYASDEQEGQ (71 aa)). Positions 258 to 301 (EGVEKERDFYFGKLREIELLCQEHGQENDDLVQRLMEVLYASDE) are APC-binding. Over residues 300 to 312 (DEQEGQTEEPEAE) the composition is skewed to acidic residues. The span at 317–326 (DQQPQQQEEY) shows a compositional bias: low complexity.

Belongs to the MAPRE family. As to quaternary structure, interacts with DCTN1. Interacts with APC (via C-terminal). Interacts with monomeric and polymerized tubulin. Interacts with SLAIN1. Interacts (via the N-terminal region) with BAG1. Interacts with ASB14. Post-translationally, ubiquitinated in an ASB14-dependent manner; leading to proteasomal degradation. In terms of processing, phosphorylated at Ser-235 by CK2 leading to enhanced cell adhesion. Phosphorylated by CDK1 and AURKB during mitosis reduces the binding affinity of MAPRE2 for microtubules. Expressed during early stages of apico-basal epithelial differentiation but down-regulated in most cells at later stages.

It localises to the cytoplasm. The protein localises to the cytoskeleton. The protein resides in the spindle. Functionally, adapter protein that is involved in microtubule polymerization, and spindle function by stabilizing microtubules and anchoring them at centrosomes. Therefore, ensures mitotic progression and genome stability. Acts as a central regulator of microtubule reorganization in apico-basal epithelial differentiation. Plays a role during oocyte meiosis by regulating microtubule dynamics. Participates in neurite growth by interacting with plexin B3/PLXNB3 and microtubule reorganization during apico-basal epithelial differentiation. Plays also an essential role for cell migration and focal adhesion dynamics. Mechanistically, recruits HAX1 to microtubules in order to regulate focal adhesion dynamics. The polypeptide is Microtubule-associated protein RP/EB family member 2 (Mapre2) (Mus musculus (Mouse)).